The sequence spans 129 residues: Serum amyloid A-2 protein (129 aa).

An N-terminal signal peptide occupies residues Met1–Ser18. Gln19 is modified (pyrrolidone carboxylic acid). Positions Lys90–Ala103 are enriched in basic and acidic residues. The segment at Lys90–Tyr129 is disordered.

It belongs to the SAA family. In terms of assembly, apolipoprotein of the HDL complex.

Its subcellular location is the secreted. In terms of biological role, major acute phase reactant. The sequence is that of Serum amyloid A-2 protein from Sus scrofa (Pig).